The following is a 441-amino-acid chain: ATP-dependent protease ATPase subunit HslU (441 aa).

Residues isoleucine 18, 60 to 65 (GVGKTE), aspartate 254, glutamate 319, and arginine 391 each bind ATP.

Belongs to the ClpX chaperone family. HslU subfamily. As to quaternary structure, a double ring-shaped homohexamer of HslV is capped on each side by a ring-shaped HslU homohexamer. The assembly of the HslU/HslV complex is dependent on binding of ATP.

The protein localises to the cytoplasm. Functionally, ATPase subunit of a proteasome-like degradation complex; this subunit has chaperone activity. The binding of ATP and its subsequent hydrolysis by HslU are essential for unfolding of protein substrates subsequently hydrolyzed by HslV. HslU recognizes the N-terminal part of its protein substrates and unfolds these before they are guided to HslV for hydrolysis. The polypeptide is ATP-dependent protease ATPase subunit HslU (Shewanella piezotolerans (strain WP3 / JCM 13877)).